Reading from the N-terminus, the 276-residue chain is Formamidopyrimidine-DNA glycosylase (276 aa).

The Schiff-base intermediate with DNA role is filled by proline 2. Residue glutamate 3 is the Proton donor of the active site. Catalysis depends on lysine 60, which acts as the Proton donor; for beta-elimination activity. Residues histidine 93 and arginine 112 each coordinate DNA. An FPG-type zinc finger spans residues 240–274; it reads NVYGKKGEPCVTCGTILEKTVVGGRGTHYCPICQP. Catalysis depends on arginine 264, which acts as the Proton donor; for delta-elimination activity.

This sequence belongs to the FPG family. As to quaternary structure, monomer. Zn(2+) is required as a cofactor.

It catalyses the reaction Hydrolysis of DNA containing ring-opened 7-methylguanine residues, releasing 2,6-diamino-4-hydroxy-5-(N-methyl)formamidopyrimidine.. The enzyme catalyses 2'-deoxyribonucleotide-(2'-deoxyribose 5'-phosphate)-2'-deoxyribonucleotide-DNA = a 3'-end 2'-deoxyribonucleotide-(2,3-dehydro-2,3-deoxyribose 5'-phosphate)-DNA + a 5'-end 5'-phospho-2'-deoxyribonucleoside-DNA + H(+). Involved in base excision repair of DNA damaged by oxidation or by mutagenic agents. Acts as a DNA glycosylase that recognizes and removes damaged bases. Has a preference for oxidized purines, such as 7,8-dihydro-8-oxoguanine (8-oxoG). Has AP (apurinic/apyrimidinic) lyase activity and introduces nicks in the DNA strand. Cleaves the DNA backbone by beta-delta elimination to generate a single-strand break at the site of the removed base with both 3'- and 5'-phosphates. This chain is Formamidopyrimidine-DNA glycosylase, found in Bacillus cereus (strain ATCC 14579 / DSM 31 / CCUG 7414 / JCM 2152 / NBRC 15305 / NCIMB 9373 / NCTC 2599 / NRRL B-3711).